The sequence spans 388 residues: Valine--pyruvate aminotransferase (388 aa).

Lys-234 is modified (N6-(pyridoxal phosphate)lysine).

This sequence belongs to the class-I pyridoxal-phosphate-dependent aminotransferase family. Pyridoxal 5'-phosphate serves as cofactor.

The catalysed reaction is L-valine + pyruvate = 3-methyl-2-oxobutanoate + L-alanine. This is Valine--pyruvate aminotransferase from Mycobacterium tuberculosis (strain ATCC 25618 / H37Rv).